Reading from the N-terminus, the 521-residue chain is Cytochrome P450 monooxygenase ARMGADRAFT_1018420 (521 aa).

Residues 9–26 (VSPIWILTAIVVVAYTTV) traverse the membrane as a helical segment. Cys443 contributes to the heme binding site. N-linked (GlcNAc...) asparagine glycosylation is present at Asn450.

It belongs to the cytochrome P450 family. Heme is required as a cofactor.

The protein resides in the membrane. Its pathway is secondary metabolite biosynthesis. In terms of biological role, cytochrome P450 monooxygenase, part of the gene cluster that mediates the biosynthesis of melleolides, a range of antifungal and phytotoxic polyketide derivatives composed of an orsellinic acid (OA) moiety esterified to various sesquiterpene alcohols. The first step in melleolides biosynthesis is performed by the delta(6)-protoilludene synthase PRO1 which catalyzes the cyclization of farnesyl diphosphate to protoilludene. The orsellinic acid synthase armB produces OA by condensing acetyl-CoA with 3 malonyl-CoA units in a three-round chain elongation reaction folowed by a C2-C7 ring closure. ArmB further catalyzes the trans-esterification of OA to the various sesquiterpene alcohols resulting from the hydroxylation of protoilludene. The melleolides cluster also includes 5 cytochrome P450 monooxygenases, 4 NAD(+)-dependent oxidoreductases, one flavin-dependent oxidoreductase, and one O-methyltransferase. The cytochrome P450 monooxygenases may be involved in protoilludene hydroxylation to elaborate melleolides with multiple alcohol groups, such as melleolide D, which carries alcohol functionalities at C-4, C-5, C-10, and C-13. The role of the NAD(+)-dependent enzymes remains unknown. Numerous melleolides, including arnamial, show 5'-O-methylation of the aromatic moiety which may be catalyzed by the methyltransferase encoded in the cluster. The flavin-dependent oxidoreductase might represent the dehydrogenase yielding the aldehyde in position 1 of arnamial and other melleolides. Finally, several halogenase localized outside of the cluster, are able to catalyze the transfer of a single chlorine atom to the melleolide backbone, resulting in a 6'-chloromelleolide product. This Armillaria gallica (Bulbous honey fungus) protein is Cytochrome P450 monooxygenase ARMGADRAFT_1018420.